We begin with the raw amino-acid sequence, 232 residues long: DQGAGVTYLEPSASQIGHKESIKDTARVLGRMYDGIEYRGFGQDVVEELAKYAGVPVFNGLTNEFHPTQMFADALTMREHSGKPLNQTAFAYVGDARYNMANSLLVLGAKLGMDVRIGAPKTLWPSENIVARARAVAEETGGKILLTENAEEAVKGADFIHTDVWVSMGEPKEAWQERIDLLKDYRVTPELMAASGNPQVKFMHCLPAFHNRETKVGEWIYETFGLNGVEVT.

Residues glutamine 15, arginine 39, and 66–69 (HPTQ) each bind carbamoyl phosphate. L-ornithine-binding positions include asparagine 99, aspartate 163, and 167-168 (SM). Residues 204 to 207 (HCLP) and threonine 232 contribute to the carbamoyl phosphate site.

The protein belongs to the aspartate/ornithine carbamoyltransferase superfamily. OTCase family.

It localises to the cytoplasm. The enzyme catalyses carbamoyl phosphate + L-ornithine = L-citrulline + phosphate + H(+). The protein operates within amino-acid biosynthesis; L-arginine biosynthesis; L-arginine from L-ornithine and carbamoyl phosphate: step 1/3. In terms of biological role, reversibly catalyzes the transfer of the carbamoyl group from carbamoyl phosphate (CP) to the N(epsilon) atom of ornithine (ORN) to produce L-citrulline. This chain is Ornithine carbamoyltransferase (argF), found in Neisseria flava.